The primary structure comprises 457 residues: Fibrinogen C domain-containing protein 1 (457 aa).

Residues Met1–Gln20 are disordered. Over Met1 to Cys33 the chain is Cytoplasmic. The chain crosses the membrane as a helical; Signal-anchor for type II membrane protein span at residues Thr34–Met54. Topologically, residues Asn55–Asn457 are extracellular. The disordered stretch occupies residues Arg211–Ser235. In terms of domain architecture, Fibrinogen C-terminal spans Cys231–Arg454. Asn233 carries N-linked (GlcNAc...) asparagine glycosylation. Residues Cys240 and Cys269 are joined by a disulfide bond. Asn336 carries an N-linked (GlcNAc...) asparagine glycan. Ca(2+)-binding residues include Asp389 and Asp391. The cysteines at positions 397 and 410 are disulfide-linked.

In terms of assembly, homotetramer; disulfide-linked.

Its subcellular location is the membrane. In terms of biological role, acetyl group-binding receptor which shows a calcium-dependent binding to acetylated structures such as chitin, some N-acetylated carbohydrates, and amino acids. The protein is Fibrinogen C domain-containing protein 1 (fibcd1) of Xenopus tropicalis (Western clawed frog).